A 373-amino-acid chain; its full sequence is Leucoanthocyanidin dioxygenase 2 (373 aa).

The Fe2OG dioxygenase domain occupies 216–315; it reads LLLQLKINYY…RVSWVVFCEP (100 aa). The Fe cation site is built by His240, Asp242, and His296. Arg306 is a 2-oxoglutarate binding site.

This sequence belongs to the iron/ascorbate-dependent oxidoreductase family. Requires L-ascorbate as cofactor. The cofactor is Fe(2+).

It carries out the reaction a (2R,3S,4S)-leucoanthocyanidin + 2-oxoglutarate + O2 = a 4-H-anthocyanidin with a 3-hydroxy group + succinate + CO2 + 2 H2O. The protein operates within pigment biosynthesis; anthocyanin biosynthesis. In terms of biological role, involved in anthocyanin and protoanthocyanidin biosynthesis by catalyzing the oxidation of leucoanthocyanidins into anthocyanidins. This is Leucoanthocyanidin dioxygenase 2 from Oryza sativa subsp. japonica (Rice).